The chain runs to 391 residues: Odorant receptor 67d (391 aa).

Residues 1–45 (MLKMAKVEPVERYCKVIRMIRFCVGFCGNDVADPNFRMWWLTYAV) are Cytoplasmic-facing. The helical transmembrane segment at 46–66 (MAAIAFFFACTGYTIYVGVVI) threads the bilayer. Residues 67 to 71 (NGDLT) are Extracellular-facing. A helical transmembrane segment spans residues 72–92 (IILQALAMVGSAVQGLTKLLV). Residues 93-140 (TANNASHMREVQNTYEDIYREYGSKGDEYAKCLEKRIRITWTLLIGFM) lie on the Cytoplasmic side of the membrane. The helical transmembrane segment at 141–161 (LVYIILLGLVITFPIFYLLIL) threads the bilayer. At 162–164 (HQK) the chain is on the extracellular side. Residues 165-185 (VLVMQFLIPFLDHTTDGGHLI) traverse the membrane as a helical segment. At 186–191 (LTAAHV) the chain is on the cytoplasmic side. Residues 192-212 (ILITFGGFGNYGGDMYLFLFV) traverse the membrane as a helical segment. At 213-268 (THVPLIKDIFCVKLTEFNELVMKRNDFPKVRAMLCDLLVWHQLYTRMLQTTKKIYS) the chain is on the extracellular side. Residues 269 to 289 (IVLFVQLSTTCVGLLCTISCI) traverse the membrane as a helical segment. At 290–297 (FMKAWPAA) the chain is on the cytoplasmic side. Residues 298-318 (PLYLLYAAITLYTFCGLGTLV) form a helical membrane-spanning segment. The Extracellular segment spans residues 319–391 (ENSNEDFLSV…FSMMLMNYLG (73 aa)).

It belongs to the insect chemoreceptor superfamily. Heteromeric odorant receptor channel (TC 1.A.69) family. Or67d subfamily. As to quaternary structure, interacts with Orco. Complexes exist early in the endomembrane system in olfactory sensory neurons (OSNs), coupling these complexes to the conserved ciliary trafficking pathway. Expressed in antenna.

It is found in the cell membrane. Its function is as follows. Plays a role in detection and sensitivity to pheromones and signal transduction of the fatty-acid-derived male pheromone 11-cis vaccenyl acetate (cVA). Acts in concert with Snmp and lush to capture cVA molecules on the surface of Or67d expressing olfactory dendrites and facilitate their transfer to the odorant-receptor Orco complex. Necessary to mediate behavioral responses to cVA by regulating both male and female mating behavior. Activation of Or67d neurons by cVA inhibits courtship of other males, whereas in females their activation promotes receptivity to other males. May form a complex with Orco to form odorant-sensing units, providing sensitive and prolonged odorant signaling and calcium permeability. The chain is Odorant receptor 67d (Or67d) from Drosophila melanogaster (Fruit fly).